The following is a 652-amino-acid chain: tRNA 5-methylaminomethyl-2-thiouridine biosynthesis bifunctional protein MnmC (652 aa).

The tract at residues 1-235 is tRNA (mnm(5)s(2)U34)-methyltransferase; sequence MPDRLVPATL…EPALRVGEYA (235 aa). The FAD-dependent cmnm(5)s(2)U34 oxidoreductase stretch occupies residues 259–652; that stretch reads IGAGLAGCAV…IRALRGRQIG (394 aa).

This sequence in the N-terminal section; belongs to the methyltransferase superfamily. tRNA (mnm(5)s(2)U34)-methyltransferase family. In the C-terminal section; belongs to the DAO family. The cofactor is FAD.

The protein localises to the cytoplasm. The catalysed reaction is 5-aminomethyl-2-thiouridine(34) in tRNA + S-adenosyl-L-methionine = 5-methylaminomethyl-2-thiouridine(34) in tRNA + S-adenosyl-L-homocysteine + H(+). Its function is as follows. Catalyzes the last two steps in the biosynthesis of 5-methylaminomethyl-2-thiouridine (mnm(5)s(2)U) at the wobble position (U34) in tRNA. Catalyzes the FAD-dependent demodification of cmnm(5)s(2)U34 to nm(5)s(2)U34, followed by the transfer of a methyl group from S-adenosyl-L-methionine to nm(5)s(2)U34, to form mnm(5)s(2)U34. The chain is tRNA 5-methylaminomethyl-2-thiouridine biosynthesis bifunctional protein MnmC from Burkholderia ambifaria (strain MC40-6).